We begin with the raw amino-acid sequence, 466 residues long: Cytochrome c-552 (466 aa).

An N-terminal signal peptide occupies residues 1-27 (MVRNLTKKSFALSALVAASLMASGVMA). His-87 contacts heme c. Cys-115, Cys-118, and Lys-119 together coordinate heme. Cys-153, Cys-156, His-157, Cys-195, Cys-198, and His-199 together coordinate heme c. The Ca(2+) site is built by Glu-201, Tyr-202, Lys-250, and Gln-252. Position 202 (Tyr-202) interacts with substrate. His-253 provides a ligand contact to substrate. Heme c-binding residues include His-264, Cys-271, Cys-274, His-275, His-290, Cys-303, Cys-306, His-307, and His-382.

This sequence belongs to the cytochrome c-552 family. Ca(2+) is required as a cofactor. It depends on heme c as a cofactor.

Its subcellular location is the periplasm. The catalysed reaction is 6 Fe(III)-[cytochrome c] + NH4(+) + 2 H2O = 6 Fe(II)-[cytochrome c] + nitrite + 8 H(+). It participates in nitrogen metabolism; nitrate reduction (assimilation). Functionally, catalyzes the reduction of nitrite to ammonia, consuming six electrons in the process. In Shewanella sediminis (strain HAW-EB3), this protein is Cytochrome c-552.